Here is a 435-residue protein sequence, read N- to C-terminus: Tyrosine-protein phosphatase non-receptor type 1 (435 aa).

M1 bears the N-acetylmethionine mark. A Tyrosine-protein phosphatase domain is found at 3–277 (MEKEFEQIDK…RFSYLAVIEG (275 aa)). At Y20 the chain carries Phosphotyrosine. S50 carries the post-translational modification Phosphoserine; by PKB/AKT1, CLK1 and CLK2. Position 66 is a phosphotyrosine; by EGFR (Y66). Substrate contacts are provided by residues D181 and 215–221 (CSAGIGR). C215 acts as the Phosphocysteine intermediate in catalysis. At C215 the chain carries Cysteine persulfide; alternate. At C215 the chain carries Cysteine sulfenic acid (-SOH); alternate. C215 is subject to Cysteine sulfinic acid (-SO2H); alternate. C215 carries the S-nitrosocysteine; in reversibly inhibited form modification. Positions 215–216 (CS) form a cross-link, n,N-(cysteine-1,S-diyl)serine (Cys-Ser); in inhibited form. Phosphoserine; by CLK1 and CLK2 occurs at positions 242 and 243. Q262 is a substrate binding site. The span at 338–351 (TQEDKDCPIKEEKG) shows a compositional bias: basic and acidic residues. Residues 338-359 (TQEDKDCPIKEEKGSPLNAAPY) are disordered. Residues S352, S363, and S365 each carry the phosphoserine modification. T368 carries the post-translational modification Phosphothreonine. Position 378 is a phosphoserine; by PKC (S378). Positions 378–398 (SLRGAQAASPAKGEPSLPEKD) are disordered. A Phosphoserine; by CDK1 modification is found at S386.

The protein belongs to the protein-tyrosine phosphatase family. Non-receptor class 1 subfamily. In terms of assembly, interacts with EPHA3 (phosphorylated); dephosphorylates EPHA3 and may regulate its trafficking and function. Interacts with MET. Interacts with NCK1. Oxidized on Cys-215; the Cys-SOH formed in response to redox signaling reacts with the alpha-amido of the following residue to form a sulfenamide cross-link, triggering a conformational change that inhibits substrate binding and activity. The active site can be restored by reduction. In terms of processing, ser-50 is the major site of phosphorylation as compared to Ser-242 and Ser-243. Activated by phosphorylation at Ser-50. Post-translationally, S-nitrosylation of Cys-215 inactivates the enzyme activity. Sulfhydration at Cys-215 following endoplasmic reticulum stress inactivates the enzyme activity, promoting EIF2AK3/PERK activity. As to expression, expressed in keratinocytes (at protein level).

It localises to the endoplasmic reticulum membrane. It carries out the reaction O-phospho-L-tyrosyl-[protein] + H2O = L-tyrosyl-[protein] + phosphate. Tyrosine-protein phosphatase which acts as a regulator of endoplasmic reticulum unfolded protein response. Mediates dephosphorylation of EIF2AK3/PERK; inactivating the protein kinase activity of EIF2AK3/PERK. May play an important role in CKII- and p60c-src-induced signal transduction cascades. May regulate the EFNA5-EPHA3 signaling pathway which modulates cell reorganization and cell-cell repulsion. May also regulate the hepatocyte growth factor receptor signaling pathway through dephosphorylation of MET. This is Tyrosine-protein phosphatase non-receptor type 1 (PTPN1) from Homo sapiens (Human).